A 142-amino-acid chain; its full sequence is Protein archease (142 aa).

Ca(2+)-binding residues include D12, D141, and I142.

Belongs to the archease family.

Functionally, activates the tRNA-splicing ligase complex by facilitating the enzymatic turnover of catalytic subunit RtcB. Acts by promoting the guanylylation of RtcB, a key intermediate step in tRNA ligation. Can also alter the NTP specificity of RtcB such that ATP, dGTP or ITP is used efficiently. This is Protein archease from Pyrococcus furiosus (strain ATCC 43587 / DSM 3638 / JCM 8422 / Vc1).